The chain runs to 304 residues: MAVEKKFVQDGYVKASMDEYFAKQLSRAGYGGMDINRTPMGTQITVYAEKPGMVIGKAGKVIRKLTRDVDRLYDLDNPQIDAQEVKRPELNAQMMASRLASSIERGWYFRKAGHNTMRAVMNAGALGCEIVISGKLTGSRSRVEKMVNGYIKHAGKPVDDIVDDGFATAVKKLGTLGCKVRIIHPDAVLPDSYRLKNAEELGSLVSTPVEEEKSAGIEELVEVEAKGEVAEAEEAVVEETAKAEAETVEETVEEVAASEVEADMITGESVTEEGEERREVNGVWQHKHGGHDYWHPTGRMHRES.

Residues 17-86 (MDEYFAKQLS…NPQIDAQEVK (70 aa)) form the KH type-2 domain.

It belongs to the universal ribosomal protein uS3 family. In terms of assembly, part of the 30S ribosomal subunit.

In terms of biological role, binds the lower part of the 30S subunit head. In Methanococcoides burtonii (strain DSM 6242 / NBRC 107633 / OCM 468 / ACE-M), this protein is Small ribosomal subunit protein uS3.